Here is a 467-residue protein sequence, read N- to C-terminus: Ribosome biogenesis protein YTM1 (467 aa).

The interval 8–95 (IKIKFFTNEE…ETFLSLEYTR (88 aa)) is ubiquitin-like (UBL) domain. The interval 105–467 (SFNNEDWISS…QINKGSDISK (363 aa)) is sufficient for interaction with ERB1 and association with 66S pre-ribosomes. WD repeat units lie at residues 120–159 (KTLP…EKQY), 161–199 (GHSG…GSIP), 216–255 (GHKA…MTTI), 293–333 (SHTQ…CIDT), 335–374 (STGY…NTTE), 382–422 (GHTN…SLYT), and 432–467 (KGAD…DISK).

Belongs to the WD repeat WDR12/YTM1 family. Component of the NOP7 complex, composed of ERB1, NOP7 and YTM1. The complex is held together by ERB1, which interacts with NOP7 via its N-terminal domain and with YTM1 via a high-affinity interaction between the seven-bladed beta-propeller domains of the 2 proteins. The NOP7 complex associates with the 66S pre-ribosome. Interacts (via UBL domain) with MDN1 (via VWFA/MIDAS domain).

It localises to the nucleus. The protein resides in the nucleolus. Its subcellular location is the nucleoplasm. Component of the NOP7 complex, which is required for maturation of the 25S and 5.8S ribosomal RNAs and formation of the 60S ribosome. The chain is Ribosome biogenesis protein YTM1 from Scheffersomyces stipitis (strain ATCC 58785 / CBS 6054 / NBRC 10063 / NRRL Y-11545) (Yeast).